Reading from the N-terminus, the 347-residue chain is Dihydroorotase (347 aa).

Residues H17 and H19 each contribute to the Zn(2+) site. Substrate contacts are provided by residues H19–R21 and N45. K103, H140, and H178 together coordinate Zn(2+). Position 103 is an N6-carboxylysine (K103). H140 is a substrate binding site. L223 serves as a coordination point for substrate. D251 lines the Zn(2+) pocket. The active site involves D251. Substrate-binding residues include H255 and A267.

Belongs to the metallo-dependent hydrolases superfamily. DHOase family. Class II DHOase subfamily. As to quaternary structure, homodimer. Zn(2+) serves as cofactor.

It catalyses the reaction (S)-dihydroorotate + H2O = N-carbamoyl-L-aspartate + H(+). It functions in the pathway pyrimidine metabolism; UMP biosynthesis via de novo pathway; (S)-dihydroorotate from bicarbonate: step 3/3. In terms of biological role, catalyzes the reversible cyclization of carbamoyl aspartate to dihydroorotate. The polypeptide is Dihydroorotase (Pectobacterium carotovorum subsp. carotovorum (strain PC1)).